The chain runs to 188 residues: Elongation factor P (188 aa).

At Lys34 the chain carries N6-(3,6-diaminohexanoyl)-5-hydroxylysine.

It belongs to the elongation factor P family. Post-translationally, may be beta-lysylated on the epsilon-amino group of Lys-34 by the combined action of EpmA and EpmB, and then hydroxylated on the C5 position of the same residue by EpmC (if this protein is present). Lysylation is critical for the stimulatory effect of EF-P on peptide-bond formation. The lysylation moiety may extend toward the peptidyltransferase center and stabilize the terminal 3-CCA end of the tRNA. Hydroxylation of the C5 position on Lys-34 may allow additional potential stabilizing hydrogen-bond interactions with the P-tRNA.

The protein resides in the cytoplasm. It functions in the pathway protein biosynthesis; polypeptide chain elongation. Involved in peptide bond synthesis. Alleviates ribosome stalling that occurs when 3 or more consecutive Pro residues or the sequence PPG is present in a protein, possibly by augmenting the peptidyl transferase activity of the ribosome. Modification of Lys-34 is required for alleviation. This is Elongation factor P from Proteus mirabilis (strain HI4320).